Reading from the N-terminus, the 307-residue chain is Follistatin-related protein 1 (307 aa).

An N-terminal signal peptide occupies residues 1–19 (MMWRRWLALALVAVAWVHA). In terms of domain architecture, Follistatin-like spans 29-52 (ICANVFCGAGRECAVTEKGEPTCL). Disulfide bonds link cysteine 30/cysteine 41, cysteine 35/cysteine 51, cysteine 53/cysteine 83, cysteine 57/cysteine 76, and cysteine 65/cysteine 97. Residues 47–99 (GEPTCLCIEQCKPHKRPVCGSNGKTYLNHCELHRDACLTGSKIQVDYDGHCKE) enclose the Kazal-like domain. Asparagine 143 is a glycosylation site (N-linked (GlcNAc...) asparagine). The region spanning 143–177 (NYSEILDKYFKNFDNGDSRLDSSEFLKFVEQNETA) is the EF-hand 1 domain. Serine 164 is modified (phosphoserine). Residues asparagine 174 and asparagine 179 are each glycosylated (N-linked (GlcNAc...) asparagine). Residues 192 to 227 (LRGLCVDALIELSDENADWKLSFQEFLKCLNPSFNP) enclose the EF-hand 2 domain. A VWFC domain is found at 232–286 (CALEDETYADGAETEVDCNRCVCACGNWVCTAMTCDGKNQKGAQTQAEEEMTRYV).

As to quaternary structure, homodimer. Interacts with SCN10A. Interacts with DIP2A; DIP2A may act as a cell surface receptor for FSTL1. Interacts with BMP4. Interacts with CD14; this interaction promotes TL4-mediated signaling cascade.

The protein resides in the secreted. Its function is as follows. Secreted glycoprotein that is involved in various physiological processes, such as angiogenesis, regulation of the immune response, cell proliferation and differentiation. Plays a role in the development of the central nervous system, skeletal system, lungs, and ureter. Promotes endothelial cell survival, migration and differentiation into network structures in an AKT-dependent manner. Also promotes survival of cardiac myocytes. Initiates various signaling cascades by activating different receptors on the cell surface such as DIP2A, TLR4 or BMP receptors. In Bos taurus (Bovine), this protein is Follistatin-related protein 1 (FSTL1).